We begin with the raw amino-acid sequence, 664 residues long: SPARC-like protein 1 (664 aa).

Positions methionine 1 to alanine 16 are cleaved as a signal peptide. Positions serine 25–threonine 34 are O-glycosylated at one additional site. Residues serine 28–aspartate 360 are disordered. O-linked (GalNAc...) threonine glycans are attached at residues threonine 31 and threonine 40. An O-linked (GalNAc...) serine glycan is attached at serine 44. The segment covering aspartate 62–serine 84 has biased composition (basic and acidic residues). A phosphoserine mark is found at serine 76, serine 84, and serine 92. Residues alanine 85–glutamate 94 show a composition bias toward polar residues. The segment covering glycine 96 to glycine 105 has biased composition (basic and acidic residues). A glycan (O-linked (GalNAc...) threonine) is linked at threonine 116. Residues leucine 120–glutamate 136 show a composition bias toward basic and acidic residues. Positions serine 146–serine 156 are enriched in polar residues. An N-linked (GlcNAc...) asparagine glycan is attached at asparagine 169. Residues tyrosine 170 to lysine 180 are compositionally biased toward basic residues. Serine 171 carries the post-translational modification Phosphoserine. Residues asparagine 176 and asparagine 196 are each glycosylated (N-linked (GlcNAc...) asparagine). The segment covering glutamine 188–asparagine 199 has biased composition (polar residues). Over residues aspartate 216–glutamate 235 the composition is skewed to basic and acidic residues. 2 stretches are compositionally biased toward acidic residues: residues aspartate 236–aspartate 248 and aspartate 259–asparagine 280. The residue at position 272 (serine 272) is a Phosphoserine. A glycan (N-linked (GlcNAc...) asparagine) is linked at asparagine 280. The segment covering serine 306–valine 316 has biased composition (basic and acidic residues). Threonine 331 is a glycosylation site (O-linked (GalNAc...) threonine). The span at aspartate 339 to glycine 349 shows a compositional bias: acidic residues. Residues serine 358 and serine 365 each carry the phosphoserine modification. The disordered stretch occupies residues glutamate 388–arginine 426. An O-linked (GalNAc...) threonine glycan is attached at threonine 398. Positions proline 401–glutamate 411 are enriched in basic and acidic residues. Asparagine 412 is a glycosylation site (N-linked (GlcNAc...) asparagine). Serine 420 carries the post-translational modification Phosphoserine. The 23-residue stretch at serine 432–cysteine 454 folds into the Follistatin-like domain. Intrachain disulfides connect cysteine 433–cysteine 444, cysteine 438–cysteine 454, cysteine 456–cysteine 490, cysteine 462–cysteine 483, cysteine 472–cysteine 509, cysteine 515–cysteine 626, and cysteine 634–cysteine 650. The Kazal-like domain maps to glycine 450–serine 511. N-linked (GlcNAc...) asparagine glycosylation occurs at asparagine 476. Residues proline 622–aspartate 657 enclose the EF-hand domain. Positions 635, 637, 639, 641, and 646 each coordinate Ca(2+).

Belongs to the SPARC family. N- and O-glycosylated. O-glycosylated with a core 1 or possibly core 8 glycan. As to expression, highly expressed in lymph node, brain, heart, lung, skeletal muscle, ovary, small intestine, and colon, with lower levels in placenta, pancreas, testis, spleen, and thymus, and no expression in kidney, liver, and peripheral blood leukocytes.

It localises to the secreted. The protein localises to the extracellular space. The protein resides in the extracellular matrix. This is SPARC-like protein 1 (SPARCL1) from Homo sapiens (Human).